The following is a 401-amino-acid chain: NALCN channel auxiliary factor 2 (401 aa).

Residues 42 to 62 (LASLLFFTALLSDHLWLCAGG) form a helical membrane-spanning segment. N-linked (GlcNAc...) asparagine glycosylation is found at asparagine 77, asparagine 97, asparagine 153, and asparagine 178. A helical transmembrane segment spans residues 362–382 (LCVLVLFLLHTFISITTLQHC).

The protein belongs to the NALF family.

It is found in the membrane. Probable component of the NALCN channel complex, a channel that regulates the resting membrane potential and controls neuronal excitability. The polypeptide is NALCN channel auxiliary factor 2 (nalf2) (Danio rerio (Zebrafish)).